Reading from the N-terminus, the 58-residue chain is UPF0391 membrane protein Bxeno_A2959 (58 aa).

Helical transmembrane passes span 4-24 (WALF…TGVA) and 33-53 (FLFI…FVVT).

It belongs to the UPF0391 family.

It localises to the cell membrane. This Paraburkholderia xenovorans (strain LB400) protein is UPF0391 membrane protein Bxeno_A2959.